A 163-amino-acid polypeptide reads, in one-letter code: Putative H/ACA ribonucleoprotein complex subunit 2-like protein (163 aa).

The segment at 1–27 is disordered; sequence MGKRNLDETMNESTVSEANGDATAPTT.

This sequence belongs to the eukaryotic ribosomal protein eL8 family. As to quaternary structure, component of the small nucleolar ribonucleoprotein particle containing H/ACA-type snoRNAs (H/ACA snoRNPs).

The protein localises to the nucleus. It localises to the nucleolus. In terms of biological role, required for ribosome biogenesis. Part of a complex which catalyzes pseudouridylation of rRNA. This involves the isomerization of uridine such that the ribose is subsequently attached to C5, instead of the normal N1. Pseudouridine ('psi') residues may serve to stabilize the conformation of rRNAs. This is Putative H/ACA ribonucleoprotein complex subunit 2-like protein from Caenorhabditis elegans.